The primary structure comprises 230 residues: Flagellar L-ring protein (230 aa).

Positions 1 to 26 are cleaved as a signal peptide; it reads MKQVRLLPSATVRAACAVAVAAFAAG. Cys-27 carries the N-palmitoyl cysteine lipid modification. Residue Cys-27 is the site of S-diacylglycerol cysteine attachment.

The protein belongs to the FlgH family. The basal body constitutes a major portion of the flagellar organelle and consists of four rings (L,P,S, and M) mounted on a central rod.

The protein resides in the cell outer membrane. Its subcellular location is the bacterial flagellum basal body. Its function is as follows. Assembles around the rod to form the L-ring and probably protects the motor/basal body from shearing forces during rotation. This chain is Flagellar L-ring protein, found in Burkholderia lata (strain ATCC 17760 / DSM 23089 / LMG 22485 / NCIMB 9086 / R18194 / 383).